Reading from the N-terminus, the 1215-residue chain is DNA-directed RNA polymerase subunit beta' (1215 aa).

The Zn(2+) site is built by cysteine 60, cysteine 62, cysteine 75, and cysteine 78. Mg(2+) is bound by residues aspartate 449, aspartate 451, and aspartate 453. Zn(2+)-binding residues include cysteine 818, cysteine 892, cysteine 899, and cysteine 902.

Belongs to the RNA polymerase beta' chain family. As to quaternary structure, the RNAP catalytic core consists of 2 alpha, 1 beta, 1 beta' and 1 omega subunit. When a sigma factor is associated with the core the holoenzyme is formed, which can initiate transcription. Mg(2+) serves as cofactor. It depends on Zn(2+) as a cofactor.

It catalyses the reaction RNA(n) + a ribonucleoside 5'-triphosphate = RNA(n+1) + diphosphate. Its function is as follows. DNA-dependent RNA polymerase catalyzes the transcription of DNA into RNA using the four ribonucleoside triphosphates as substrates. This chain is DNA-directed RNA polymerase subunit beta', found in Limosilactobacillus fermentum (strain NBRC 3956 / LMG 18251) (Lactobacillus fermentum).